Here is a 361-residue protein sequence, read N- to C-terminus: tRNA-specific 2-thiouridylase MnmA (361 aa).

Residues 6 to 13 (LVSGGVDS) and isoleucine 32 contribute to the ATP site. An interaction with target base in tRNA region spans residues 93–95 (NPD). The active-site Nucleophile is the cysteine 98. Cysteine 98 and cysteine 193 are oxidised to a cystine. Glycine 121 lines the ATP pocket. The segment at 143–145 (KDQ) is interaction with tRNA. Catalysis depends on cysteine 193, which acts as the Cysteine persulfide intermediate.

The protein belongs to the MnmA/TRMU family.

It is found in the cytoplasm. The catalysed reaction is S-sulfanyl-L-cysteinyl-[protein] + uridine(34) in tRNA + AH2 + ATP = 2-thiouridine(34) in tRNA + L-cysteinyl-[protein] + A + AMP + diphosphate + H(+). Catalyzes the 2-thiolation of uridine at the wobble position (U34) of tRNA, leading to the formation of s(2)U34. In Porphyromonas gingivalis (strain ATCC BAA-308 / W83), this protein is tRNA-specific 2-thiouridylase MnmA.